A 226-amino-acid polypeptide reads, in one-letter code: ATP-dependent dethiobiotin synthetase BioD (226 aa).

Position 12 to 17 (E12 to V17) interacts with ATP. T16 is a Mg(2+) binding site. The active site involves K39. T43 contacts substrate. ATP-binding positions include D47, E108–G111, N168–C169, and P200–I202. Positions 47 and 108 each coordinate Mg(2+).

Belongs to the dethiobiotin synthetase family. Homodimer. The cofactor is Mg(2+).

The protein resides in the cytoplasm. It carries out the reaction (7R,8S)-7,8-diammoniononanoate + CO2 + ATP = (4R,5S)-dethiobiotin + ADP + phosphate + 3 H(+). The enzyme catalyses (7R,8S)-8-amino-7-(carboxyamino)nonanoate + ATP = (4R,5S)-dethiobiotin + ADP + phosphate + H(+). It functions in the pathway cofactor biosynthesis; biotin biosynthesis; biotin from 7,8-diaminononanoate: step 1/2. Its function is as follows. Catalyzes a mechanistically unusual reaction, the ATP-dependent insertion of CO2 between the N7 and N8 nitrogen atoms of 7,8-diaminopelargonic acid (DAPA, also called 7,8-diammoniononanoate) to form a ureido ring. This cyanobacterium does not encode bioA (which catalyzes the formation of the precursor for this reaction in the cannonical pathway), instead it encodes bioU, which replaces bioA and also performs the first half of the cannonical BioD reaction. Thus in this organism BioD has a different substrate. This is ATP-dependent dethiobiotin synthetase BioD from Gloeothece citriformis (strain PCC 7424) (Cyanothece sp. (strain PCC 7424)).